Consider the following 2188-residue polypeptide: Tiggrin (2188 aa).

The first 18 residues, 1–18 (MRALGGITLLLAVAICQG), serve as a signal peptide directing secretion. Coiled coils occupy residues 570-635 (SRLE…EHIK), 1009-1050 (LKNL…EIES), 1312-1343 (TFVEFEMELNQERDRLQKLANQYSVNVVEIEE), and 1613-1641 (KQQRWTIEELELRLNNDQKHLQDAVAQYH). The tract at residues 1984–2188 (IFSKDRGDQP…FWEKLKEKLG (205 aa)) is disordered. Positions 1985 to 1998 (FSKDRGDQPPHTYD) are enriched in basic and acidic residues. The Cell attachment site motif lies at 1989–1991 (RGD). Residues 2000-2009 (SFVEGDEPGL) show a composition bias toward acidic residues. Over residues 2016–2033 (PRPPNPAPIVSTPKPPLP) the composition is skewed to pro residues. Low complexity-rich tracts occupy residues 2057 to 2077 (GSASASASGGPTGSSASASAS) and 2091 to 2101 (QQEVDLGQQQQ). Residues 2115–2139 (GQQTQVEDTDWNQQAEDLGQQQQVQ) show a composition bias toward polar residues. Positions 2148–2165 (QTQGHSSSSNSRSQPLQQ) are enriched in low complexity. Basic and acidic residues predominate over residues 2179–2188 (FWEKLKEKLG).

In terms of processing, O-glycosylation by pgant3 is required for proper secretion and localization to the basal cell layer interface during wing development. As to expression, in embryos, expressed in the apodemes (muscle attachment sites) of the major longitudinal muscles 4, 6, 7, 12 and 13 and the wide dorsal oblique muscles 9 and 10, in hemocytes, in fat body cells, in basement membranes surrounding the gut and in the commissures of the ventral nerve cord. Expressed in larval imaginal wing disk and in pupal wing. In adult flies, expressed in the jump muscle (at protein level).

It localises to the secreted. The protein resides in the extracellular space. Its subcellular location is the extracellular matrix. In terms of biological role, functions as a ligand for integrin alpha-PS2/beta-PS. Required in larvae for proper muscle structure and function. Involved in the regulation of cell adhesion during wing development. This Drosophila melanogaster (Fruit fly) protein is Tiggrin.